A 297-amino-acid polypeptide reads, in one-letter code: Phenylalanine-4-hydroxylase (297 aa).

Fe cation is bound by residues histidine 138, histidine 143, and glutamate 184.

This sequence belongs to the biopterin-dependent aromatic amino acid hydroxylase family. Monomer. Fe(2+) serves as cofactor.

The enzyme catalyses (6R)-L-erythro-5,6,7,8-tetrahydrobiopterin + L-phenylalanine + O2 = (4aS,6R)-4a-hydroxy-L-erythro-5,6,7,8-tetrahydrobiopterin + L-tyrosine. The protein operates within amino-acid degradation; L-phenylalanine degradation; acetoacetate and fumarate from L-phenylalanine: step 1/6. This is Phenylalanine-4-hydroxylase (phhA) from Chromobacterium violaceum (strain ATCC 12472 / DSM 30191 / JCM 1249 / CCUG 213 / NBRC 12614 / NCIMB 9131 / NCTC 9757 / MK).